A 401-amino-acid chain; its full sequence is Argininosuccinate synthase (401 aa).

ATP-binding positions include 10–18 (AYSGGVDTS) and Ala-38. Tyr-89 provides a ligand contact to L-citrulline. Gly-119 provides a ligand contact to ATP. 3 residues coordinate L-aspartate: Thr-121, Asn-125, and Asp-126. Asn-125 provides a ligand contact to L-citrulline. L-citrulline contacts are provided by Arg-129, Ser-177, Ser-186, Glu-262, and Tyr-274.

This sequence belongs to the argininosuccinate synthase family. Type 1 subfamily. As to quaternary structure, homotetramer.

It localises to the cytoplasm. It carries out the reaction L-citrulline + L-aspartate + ATP = 2-(N(omega)-L-arginino)succinate + AMP + diphosphate + H(+). It functions in the pathway amino-acid biosynthesis; L-arginine biosynthesis; L-arginine from L-ornithine and carbamoyl phosphate: step 2/3. In Synechococcus sp. (strain CC9311), this protein is Argininosuccinate synthase.